A 302-amino-acid polypeptide reads, in one-letter code: S-crystallin SL4 (302 aa).

A run of 3 repeats spans residues 45 to 54, 55 to 64, and 65 to 74. The segment at 45 to 84 is 4 X approximate tandem repeats of G-G-Y-[AYP]-V-[QK]-[SG]-R-G-D; the sequence is GGYAVQSRGDGGYYVKSRGDGGYPVQGRGDTGYSSQTRSD. 3 consecutive short sequence motifs (cell attachment site) follow at residues 52-54, 62-64, and 72-74; these read RGD. A disordered region spans residues 68–92; sequence PVQGRGDTGYSSQTRSDDACLGQGR. A 4; approximate repeat occupies 75–84; sequence TGYSSQTRSD. A Cell attachment site motif is present at residues 113–115; it reads RGD. Residues 118–205 are disordered; sequence SDINSGLYSG…ESASRRSRNH (88 aa). Composition is skewed to basic and acidic residues over residues 129–166 and 177–192; these read RMDDSCHTSESRRMDDPCGTDESRRLDVPCHSDDHYRS and AEDRRGGHSDSHRIDI. A GST C-terminal domain is found at 183-302; it reads GHSDSHRIDI…YIKRRYQSDF (120 aa).

This sequence belongs to the GST superfamily.

S-crystallins are structural components of squids and octopi eye lens. The chain is S-crystallin SL4 from Nototodarus sloanii (Wellington flying squid).